Here is a 447-residue protein sequence, read N- to C-terminus: Argininosuccinate synthase (447 aa).

Residues 17–25 and Ala-43 contribute to the ATP site; that span reads AFSGGLDTS. Tyr-99 contacts L-citrulline. The ATP site is built by Gly-129 and Thr-131. Positions 131, 135, and 136 each coordinate L-aspartate. Asn-135 is a binding site for L-citrulline. Asp-136 provides a ligand contact to ATP. L-citrulline-binding residues include Arg-139 and Ser-192. An ATP-binding site is contributed by Asp-194. Positions 201, 203, and 280 each coordinate L-citrulline.

This sequence belongs to the argininosuccinate synthase family. Type 2 subfamily. Homotetramer.

It is found in the cytoplasm. The catalysed reaction is L-citrulline + L-aspartate + ATP = 2-(N(omega)-L-arginino)succinate + AMP + diphosphate + H(+). It participates in amino-acid biosynthesis; L-arginine biosynthesis; L-arginine from L-ornithine and carbamoyl phosphate: step 2/3. In Escherichia coli O8 (strain IAI1), this protein is Argininosuccinate synthase.